A 134-amino-acid polypeptide reads, in one-letter code: Phosphoribosyl-AMP cyclohydrolase (134 aa).

Aspartate 80 serves as a coordination point for Mg(2+). Cysteine 81 serves as a coordination point for Zn(2+). Mg(2+) contacts are provided by aspartate 82 and aspartate 84. Cysteine 98 and cysteine 105 together coordinate Zn(2+).

This sequence belongs to the PRA-CH family. In terms of assembly, homodimer. The cofactor is Mg(2+). Zn(2+) serves as cofactor.

The protein resides in the cytoplasm. The enzyme catalyses 1-(5-phospho-beta-D-ribosyl)-5'-AMP + H2O = 1-(5-phospho-beta-D-ribosyl)-5-[(5-phospho-beta-D-ribosylamino)methylideneamino]imidazole-4-carboxamide. The protein operates within amino-acid biosynthesis; L-histidine biosynthesis; L-histidine from 5-phospho-alpha-D-ribose 1-diphosphate: step 3/9. Functionally, catalyzes the hydrolysis of the adenine ring of phosphoribosyl-AMP. The polypeptide is Phosphoribosyl-AMP cyclohydrolase (Bordetella bronchiseptica (strain ATCC BAA-588 / NCTC 13252 / RB50) (Alcaligenes bronchisepticus)).